The sequence spans 215 residues: Vesicle-trafficking protein SEC22b (215 aa).

Residues 2–194 (VLLTMIARVA…KYLNMRSTYA (193 aa)) lie on the Cytoplasmic side of the membrane. A Longin domain is found at 6-119 (MIARVADGLP…YSFIEFDTFI (114 aa)). An N6-acetyllysine modification is found at K38. A v-SNARE coiled-coil homology domain is found at 134 to 194 (NLGSINTELQ…KYLNMRSTYA (61 aa)). Phosphoserine is present on S137. Residue T140 is modified to Phosphothreonine. Residues S164, S168, S174, and S177 each carry the phosphoserine modification. A helical; Anchor for type IV membrane protein transmembrane segment spans residues 195–215 (KLAAVAVFFIMLIVYVRFWWL).

It belongs to the synaptobrevin family. Interacts with STX17. Component of two distinct SNARE complexes consisting of STX5, GOSR2/BOS1, BET1 and SEC22B or STX18, USE1L, BNIP1/SEC20L and SEC22B. YKT6 can probably replace SEC22B in either complex. Interacts with the COPII Sec23/24 complex composed of SEC23A and SEC24A; recruits SEC22B into COPII-coated vesicles to allow its transport from the endoplasmic reticulum to the Golgi. Interacts with BET1.

The protein localises to the endoplasmic reticulum membrane. It localises to the endoplasmic reticulum-Golgi intermediate compartment membrane. Its subcellular location is the golgi apparatus. It is found in the cis-Golgi network membrane. The protein resides in the trans-Golgi network membrane. The protein localises to the melanosome. In terms of biological role, SNARE involved in targeting and fusion of ER-derived transport vesicles with the Golgi complex as well as Golgi-derived retrograde transport vesicles with the ER. This is Vesicle-trafficking protein SEC22b (SEC22B) from Homo sapiens (Human).